Consider the following 239-residue polypeptide: 3-dehydroquinate dehydratase (239 aa).

3-dehydroquinate-binding positions include 35 to 37 and R70; that span reads ELR. The Proton donor/acceptor role is filled by H133. K160 acts as the Schiff-base intermediate with substrate in catalysis. Positions 202 and 225 each coordinate 3-dehydroquinate.

It belongs to the type-I 3-dehydroquinase family. Homodimer.

The enzyme catalyses 3-dehydroquinate = 3-dehydroshikimate + H2O. Its pathway is metabolic intermediate biosynthesis; chorismate biosynthesis; chorismate from D-erythrose 4-phosphate and phosphoenolpyruvate: step 3/7. Functionally, involved in the third step of the chorismate pathway, which leads to the biosynthesis of aromatic amino acids. Catalyzes the cis-dehydration of 3-dehydroquinate (DHQ) and introduces the first double bond of the aromatic ring to yield 3-dehydroshikimate. In Staphylococcus saprophyticus subsp. saprophyticus (strain ATCC 15305 / DSM 20229 / NCIMB 8711 / NCTC 7292 / S-41), this protein is 3-dehydroquinate dehydratase.